A 485-amino-acid polypeptide reads, in one-letter code: NADH-quinone oxidoreductase subunit N (485 aa).

14 consecutive transmembrane segments (helical) span residues 8–28 (LIAL…MLSI), 35–55 (FINT…LYFV), 75–95 (LYIG…YSWL), 104–124 (EFYL…CANH), 125–145 (LASL…LIGY), 159–179 (YMLL…LLYA), 203–223 (ILSG…LVPF), 235–255 (PAPV…AVVI), 271–291 (TVLT…ALTQ), 297–317 (LLGY…VAVQ), 326–346 (VGIY…VVSL), 383–403 (LAGI…VLGV), 406–426 (ELWW…YYYL), and 455–475 (MVVL…QPLI).

The protein belongs to the complex I subunit 2 family. In terms of assembly, NDH-1 is composed of 13 different subunits. Subunits NuoA, H, J, K, L, M, N constitute the membrane sector of the complex.

It is found in the cell inner membrane. The catalysed reaction is a quinone + NADH + 5 H(+)(in) = a quinol + NAD(+) + 4 H(+)(out). In terms of biological role, NDH-1 shuttles electrons from NADH, via FMN and iron-sulfur (Fe-S) centers, to quinones in the respiratory chain. The immediate electron acceptor for the enzyme in this species is believed to be ubiquinone. Couples the redox reaction to proton translocation (for every two electrons transferred, four hydrogen ions are translocated across the cytoplasmic membrane), and thus conserves the redox energy in a proton gradient. In Photorhabdus laumondii subsp. laumondii (strain DSM 15139 / CIP 105565 / TT01) (Photorhabdus luminescens subsp. laumondii), this protein is NADH-quinone oxidoreductase subunit N.